Reading from the N-terminus, the 419-residue chain is MSSSGAMPAVSSASSSAAVGILSATTAKTKTKKKHFVQQKVKVFRASDPLISVFMWGVNHSVNELIQVPVPVMLLPDDFKANSKIKVTNHLFNRENLPSHFKFKDYCPQVFRNLRERFGIDDQDFQASLTRSSPYCESEGHDGRFLLSYDKTLVIKEISSEDVADMHNILSHYHQHIVKCHGNTLLPQFLGMYRLSVDNEDSYIMVMRNMFSHRLTVHRKYDLKGSLVSREASDKEKIKELPTLKDMDFLNKSQKVYVDEEQKKNFMEKLKRDVDFLVQLKLMDYSLLLGIHEVFRAEQEEEEDLEEDHTENESSPHMNVGSYGTSPEGIAGYLNSHKPLGPGEFEPIIDVYAIKSSDNAPQKEVYFMGLIDILTHYDAKKKAAHAAKTVKHGAGAEISTVHPDQYGKRFLEFVTNIFA.

In terms of domain architecture, PIPK spans 46–418; that stretch reads ASDPLISVFM…RFLEFVTNIF (373 aa). Residues 299-310 show a composition bias toward acidic residues; it reads QEEEEDLEEDHT. Residues 299 to 320 are disordered; it reads QEEEEDLEEDHTENESSPHMNV.

Phosphorylated, phosphorylation is induced by EGF.

The protein resides in the endoplasmic reticulum. It is found in the cytoplasm. It catalyses the reaction a 1,2-diacyl-sn-glycero-3-phospho-(1D-myo-inositol-5-phosphate) + ATP = a 1,2-diacyl-sn-glycero-3-phospho-(1D-myo-inositol-4,5-bisphosphate) + ADP + H(+). The catalysed reaction is 1,2-dihexadecanoyl-sn-glycero-3-phospho-(1D-myo-inositol-5-phosphate) + ATP = 1,2-dihexadecanoyl-sn-glycero-3-phospho-(1D-myo-inositol-4,5-bisphosphate) + ADP + H(+). The enzyme catalyses 1,2-dihexadecanoyl-sn-glycero-3-phospho-(1D-myo-inositol-5-phosphate) + GTP = 1,2-dihexadecanoyl-sn-glycero-3-phospho-(1D-myo-inositol-4,5-bisphosphate) + GDP + H(+). Phosphatidylinositol 5-phosphate 4-kinase with low enzymatic activity. May be a GTP sensor, has higher GTP-dependent kinase activity than ATP-dependent kinase activity. This chain is Phosphatidylinositol 5-phosphate 4-kinase type-2 gamma (pip4k2c), found in Xenopus tropicalis (Western clawed frog).